We begin with the raw amino-acid sequence, 264 residues long: Thymidylate synthase (264 aa).

Arg-21 contacts dUMP. His-51 is a (6R)-5,10-methylene-5,6,7,8-tetrahydrofolate binding site. 126–127 (RR) serves as a coordination point for dUMP. The active-site Nucleophile is Cys-146. DUMP is bound by residues 166 to 169 (RSCD), Asn-177, and 207 to 209 (HLY). Asp-169 serves as a coordination point for (6R)-5,10-methylene-5,6,7,8-tetrahydrofolate. Ala-263 provides a ligand contact to (6R)-5,10-methylene-5,6,7,8-tetrahydrofolate.

It belongs to the thymidylate synthase family. Bacterial-type ThyA subfamily. Homodimer.

It localises to the cytoplasm. The catalysed reaction is dUMP + (6R)-5,10-methylene-5,6,7,8-tetrahydrofolate = 7,8-dihydrofolate + dTMP. It participates in pyrimidine metabolism; dTTP biosynthesis. Functionally, catalyzes the reductive methylation of 2'-deoxyuridine-5'-monophosphate (dUMP) to 2'-deoxythymidine-5'-monophosphate (dTMP) while utilizing 5,10-methylenetetrahydrofolate (mTHF) as the methyl donor and reductant in the reaction, yielding dihydrofolate (DHF) as a by-product. This enzymatic reaction provides an intracellular de novo source of dTMP, an essential precursor for DNA biosynthesis. This Xenorhabdus nematophila (strain ATCC 19061 / DSM 3370 / CCUG 14189 / LMG 1036 / NCIMB 9965 / AN6) protein is Thymidylate synthase.